The chain runs to 405 residues: CMP-sialic acid transporter 4 (405 aa).

Residues 1–43 (MQRNGVMECSVCHSKVVAPSPRSVSRAYDKHRSKISSKYRALN) are Cytoplasmic-facing. Residues 44–64 (FLLVSGDCILVGLQPILVFMS) traverse the membrane as a helical segment. Residues 65 to 74 (KVDGKFQFSP) lie on the Lumenal side of the membrane. The helical transmembrane segment at 75–95 (ISVNFLTEVTKVIFAIVMLII) threads the bilayer. The Cytoplasmic segment spans residues 96–121 (QSRKQKVGEKPLLSLSTFVQAARNNA). The helical transmembrane segment at 122–142 (LLAVPALLYAINNYLKFIMQL) threads the bilayer. Position 143 (Tyr143) is a topological domain, lumenal. A helical transmembrane segment spans residues 144 to 164 (FSPATVKMLSNLKVLVIAILL). Over 165-171 (KFIMRRK) the chain is Cytoplasmic. A helical transmembrane segment spans residues 172-192 (FSIIQWEALALLLIGISVNQL). The Lumenal segment spans residues 193-203 (SSIPDGTKSFG). Residues 204–224 (LAVTTIAYIYTLIFVTVPSLA) form a helical membrane-spanning segment. Over 225–244 (SVYNEYALKSQFDTSIYLQN) the chain is Cytoplasmic. A helical transmembrane segment spans residues 245 to 265 (LFLYGYGAIFNFLGILGTVIF). The Lumenal portion of the chain corresponds to 266–281 (QGPESFDILQGHSRAT). The chain crosses the membrane as a helical span at residues 282 to 302 (MFLICNNAAQGILSSFFFKYA). The Cytoplasmic portion of the chain corresponds to 303–322 (DTILKKYSSTVATIFTGLAS). The helical transmembrane segment at 323–343 (AAFLGHTLTVNFLLGISIVFI) threads the bilayer. The Lumenal portion of the chain corresponds to 344 to 405 (SMHQFFSPLA…TDERKPLLPI (62 aa)). The disordered stretch occupies residues 386 to 405 (AADDASHLTSTDERKPLLPI). Residues 389 to 405 (DASHLTSTDERKPLLPI) are compositionally biased toward basic and acidic residues.

The protein belongs to the nucleotide-sugar transporter family. CMP-Sialate:CMP antiporter (TC 2.A.7.12) subfamily.

The protein localises to the golgi apparatus membrane. Sugar transporter involved in the transport of CMP-sialic acid from the cytoplasm into the Golgi. May transport important nucleotide sugars such as CMP-Kdo (2-keto-3-deoxy-D-manno-octulosonic acid) in physiological conditions. In Oryza sativa subsp. indica (Rice), this protein is CMP-sialic acid transporter 4.